The sequence spans 356 residues: S-adenosylmethionine:tRNA ribosyltransferase-isomerase (356 aa).

This sequence belongs to the QueA family. Monomer.

The protein localises to the cytoplasm. The catalysed reaction is 7-aminomethyl-7-carbaguanosine(34) in tRNA + S-adenosyl-L-methionine = epoxyqueuosine(34) in tRNA + adenine + L-methionine + 2 H(+). It participates in tRNA modification; tRNA-queuosine biosynthesis. Functionally, transfers and isomerizes the ribose moiety from AdoMet to the 7-aminomethyl group of 7-deazaguanine (preQ1-tRNA) to give epoxyqueuosine (oQ-tRNA). The sequence is that of S-adenosylmethionine:tRNA ribosyltransferase-isomerase from Escherichia coli O81 (strain ED1a).